The sequence spans 488 residues: Glutamyl-tRNA(Gln) amidotransferase subunit A (488 aa).

Active-site charge relay system residues include K77 and S152. S176 (acyl-ester intermediate) is an active-site residue.

Belongs to the amidase family. GatA subfamily. In terms of assembly, heterotrimer of A, B and C subunits.

The enzyme catalyses L-glutamyl-tRNA(Gln) + L-glutamine + ATP + H2O = L-glutaminyl-tRNA(Gln) + L-glutamate + ADP + phosphate + H(+). Its function is as follows. Allows the formation of correctly charged Gln-tRNA(Gln) through the transamidation of misacylated Glu-tRNA(Gln) in organisms which lack glutaminyl-tRNA synthetase. The reaction takes place in the presence of glutamine and ATP through an activated gamma-phospho-Glu-tRNA(Gln). This Streptococcus pyogenes serotype M2 (strain MGAS10270) protein is Glutamyl-tRNA(Gln) amidotransferase subunit A.